A 1167-amino-acid chain; its full sequence is Non-toxic nonhemagglutinin (1167 aa).

Positions 1 to 381 are light chain nLC; that stretch reads MDIIDNVDIT…PQQIINLIDN (381 aa). The tract at residues 382 to 804 is N-heavy chain nHN; sequence NNILLIKSYI…LFNSKIQLTI (423 aa). Residues 805–1167 are C-heavy chain nHC; it reads KNEKPEYNLL…LNDIYSWTLI (363 aa).

This sequence belongs to the botulism non-toxic nonhemagglutinin family.

In terms of biological role, expression of the ptox operon (ntnh-orfX1-orfX2-orfX3-pmp1) in B.thuringiensis kills Anopheles but not Aedes mosquito 3rd instar larvae. The ntnh-pmp1 construct is about half as toxic. The sequence is that of Non-toxic nonhemagglutinin from Paraclostridium bifermentans (Clostridium bifermentans).